Here is a 600-residue protein sequence, read N- to C-terminus: Translation initiation factor IF-2 (600 aa).

The tr-type G domain maps to 112-279; sequence ERAPIITVMG…AINLQAEILE (168 aa). The tract at residues 121–128 is G1; the sequence is GHVDHGKT. GTP is bound at residue 121-128; sequence GHVDHGKT. The segment at 146–150 is G2; the sequence is GITQH. Positions 167-170 are G3; that stretch reads DTPG. Residues 167–171 and 221–224 each bind GTP; these read DTPGH and NKMD. A G4 region spans residues 221–224; sequence NKMD. The G5 stretch occupies residues 257 to 259; it reads SAL.

Belongs to the TRAFAC class translation factor GTPase superfamily. Classic translation factor GTPase family. IF-2 subfamily.

It is found in the cytoplasm. Its function is as follows. One of the essential components for the initiation of protein synthesis. Protects formylmethionyl-tRNA from spontaneous hydrolysis and promotes its binding to the 30S ribosomal subunits. Also involved in the hydrolysis of GTP during the formation of the 70S ribosomal complex. The sequence is that of Translation initiation factor IF-2 from Mycoplasma mobile (strain ATCC 43663 / 163K / NCTC 11711) (Mesomycoplasma mobile).